A 68-amino-acid polypeptide reads, in one-letter code: Copper transport protein ATOX1 (68 aa).

One can recognise an HMA domain in the interval 1 to 63 (MPKHEFSVDM…TLKKTGKTVS (63 aa)). Residues Cys-12 and Cys-15 each coordinate Cu cation. Ser-47 carries the phosphoserine modification. Lys-60 carries the post-translational modification N6-acetyllysine.

It belongs to the ATX1 family. As to quaternary structure, homodimer. Interacts with ATP7B. Interacts with ATP7A. Interacts (via dimer form) with SLC31A1 (via C-terminal domain); this interaction improves ATOX1 stability and controls intracellular Cu(I) levels. Ubiquitous.

Functionally, binds and deliver cytosolic copper to the copper ATPase proteins. May be important in cellular antioxidant defense. The sequence is that of Copper transport protein ATOX1 from Homo sapiens (Human).